The primary structure comprises 105 residues: Small ribosomal subunit protein eS10B (105 aa).

This sequence belongs to the eukaryotic ribosomal protein eS10 family. As to quaternary structure, component of the small ribosomal subunit (SSU). Mature yeast ribosomes consist of a small (40S) and a large (60S) subunit. The 40S small subunit contains 1 molecule of ribosomal RNA (18S rRNA) and 33 different proteins (encoded by 57 genes). The large 60S subunit contains 3 rRNA molecules (25S, 5.8S and 5S rRNA) and 46 different proteins (encoded by 81 genes). eS10 interacts with GCN1 (via middle region); this interaction is direct and promotes GCN2 kinase activity. The N-terminus is not modified.

The protein resides in the cytoplasm. Functionally, component of the ribosome, a large ribonucleoprotein complex responsible for the synthesis of proteins in the cell. The small ribosomal subunit (SSU) binds messenger RNAs (mRNAs) and translates the encoded message by selecting cognate aminoacyl-transfer RNA (tRNA) molecules. The large subunit (LSU) contains the ribosomal catalytic site termed the peptidyl transferase center (PTC), which catalyzes the formation of peptide bonds, thereby polymerizing the amino acids delivered by tRNAs into a polypeptide chain. The nascent polypeptides leave the ribosome through a tunnel in the LSU and interact with protein factors that function in enzymatic processing, targeting, and the membrane insertion of nascent chains at the exit of the ribosomal tunnel. eS10 plays a role as a positive regulator of the GCN2 kinase activity by stimulating GCN1-mediated GCN2 activation. The polypeptide is Small ribosomal subunit protein eS10B (Saccharomyces cerevisiae (strain ATCC 204508 / S288c) (Baker's yeast)).